The chain runs to 277 residues: Phosphatidylglycerol--prolipoprotein diacylglyceryl transferase (277 aa).

Helical transmembrane passes span 22-42 (ISIR…YIVV), 59-79 (LFFY…CLFY), 107-127 (GYEG…LWLY), and 133-153 (MNYM…ACFI). Arginine 154 serves as a coordination point for a 1,2-diacyl-sn-glycero-3-phospho-(1'-sn-glycerol). 3 helical membrane-spanning segments follow: residues 186–206 (PAQL…MFLY), 216–236 (GFFF…VEFL), and 251–271 (MGQW…FFYG).

It belongs to the Lgt family.

It is found in the cell inner membrane. It carries out the reaction L-cysteinyl-[prolipoprotein] + a 1,2-diacyl-sn-glycero-3-phospho-(1'-sn-glycerol) = an S-1,2-diacyl-sn-glyceryl-L-cysteinyl-[prolipoprotein] + sn-glycerol 1-phosphate + H(+). It functions in the pathway protein modification; lipoprotein biosynthesis (diacylglyceryl transfer). Functionally, catalyzes the transfer of the diacylglyceryl group from phosphatidylglycerol to the sulfhydryl group of the N-terminal cysteine of a prolipoprotein, the first step in the formation of mature lipoproteins. This chain is Phosphatidylglycerol--prolipoprotein diacylglyceryl transferase, found in Bacteroides fragilis (strain ATCC 25285 / DSM 2151 / CCUG 4856 / JCM 11019 / LMG 10263 / NCTC 9343 / Onslow / VPI 2553 / EN-2).